Consider the following 321-residue polypeptide: Mitochondrial thiamine pyrophosphate carrier 1 (321 aa).

3 Solcar repeats span residues 12-110 (GSRQ…ISQM), 121-207 (PSSA…LKPV), and 216-311 (PLGS…AMGI). The next 6 membrane-spanning stretches (helical) occupy residues 17–38 (VVVAGAAAGLVSRFVIAPLDVI), 91–107 (LLYLTYGSVQFSAYTNI), 127–147 (FISGAGAGAAATTVTYPLDLL), 182–199 (GLGAGVSQIVPYMGLFFA), 213–231 (LPLPLGSSDAVAGVVASVV), and 286–303 (GLTVSLLKAAPASAVTMW).

The protein belongs to the mitochondrial carrier (TC 2.A.29) family.

It localises to the mitochondrion inner membrane. Mitochondrial transporter that mediates uptake of thiamine pyrophosphate (ThPP) into mitochondria. This chain is Mitochondrial thiamine pyrophosphate carrier 1 (TPC1), found in Phaeosphaeria nodorum (strain SN15 / ATCC MYA-4574 / FGSC 10173) (Glume blotch fungus).